We begin with the raw amino-acid sequence, 598 residues long: MSPEALQELIFTIANNLVSEGKAGTLTAEELPDSAKFAVMRPKDRAHGDWASNAAMQLAKKAGMKPRDLAQLFADALNGTDGIAAVEVAGPGFINITLDSASAAAVVDQVLDEGNRFGKNNHLSGKTLNLEFVSANPTGPIHIGGTRWAAVGDSMARILQANGATVVREYYFNDHGEQINRFAKSLVAAAHDEPTPVDGYKGAYIDEIARRVIVEANAEGIDILNLPRVDGGTDEKGEPLGEGDSEQREEFRKRAVPMMFDEIRQSMKEFRVHFDVWFHENSLYEDGEVEKAIADLRNAGDIYEKDGATWFESTEHGDDKDRVIIKSDGTYAYFAADIAYYRNKRHRKTDPADVAIYMLGADHHGYIGRMMAMCAAFGDKPGENMQILIGQMVNVMKDGKPVRMSKRAGNIVTIDDLIDAIGVDASRYSLARTDYNSPVDIDLNLLASHSNDNPVYYVQYAHARSCNVDRNAEAAQINAADADLSLLDTEADGEVIAALAQWPALLTLAGDLRAPHRIAHYLEDLAAAYHKWYNVERVVPMPLTEAEERADEQTRERTRIAKNPEPARAAARLKLNDAVQTVIAEGLDLLGVTAPDKM.

The 'HIGH' region motif lies at 135–145; that stretch reads ANPTGPIHIGG. The segment at 229-248 is disordered; it reads VDGGTDEKGEPLGEGDSEQR. A compositionally biased stretch (basic and acidic residues) spans 231–248; it reads GGTDEKGEPLGEGDSEQR.

It belongs to the class-I aminoacyl-tRNA synthetase family. As to quaternary structure, monomer.

The protein resides in the cytoplasm. The enzyme catalyses tRNA(Arg) + L-arginine + ATP = L-arginyl-tRNA(Arg) + AMP + diphosphate. The protein is Arginine--tRNA ligase of Bifidobacterium animalis subsp. lactis (strain AD011).